Here is a 286-residue protein sequence, read N- to C-terminus: Single myb histone 5 (286 aa).

An HTH myb-type domain is found at 1–61 (MGAPKQRWTS…KWRNMNVIVT (61 aa)). The H-T-H motif DNA-binding region spans 28 to 57 (WRMILNDPELSSTLRYRSNVDLKDKWRNMN). An H15 domain is found at 122–190 (SHSRLDNIIM…KVNRKYRIAP (69 aa)). Residues 229-277 (EAAAAAAAHAVAEAEAIMAEAEAAAREAEAAEAEARAAQAFAEAAVLTL) are a coiled coil.

This sequence belongs to the histone H1/H5 family. SMH subfamily. As to quaternary structure, forms a homodimer and heterodimers.

The protein resides in the nucleus. It is found in the chromosome. Its subcellular location is the nucleolus. It localises to the telomere. Its function is as follows. Binds preferentially double-stranded telomeric repeats, but may also bind to the single telomeric strand. The protein is Single myb histone 5 (SMH5) of Zea mays (Maize).